A 507-amino-acid polypeptide reads, in one-letter code: Maturase K (507 aa).

Belongs to the intron maturase 2 family. MatK subfamily.

The protein resides in the plastid. It localises to the chloroplast. Usually encoded in the trnK tRNA gene intron. Probably assists in splicing its own and other chloroplast group II introns. The sequence is that of Maturase K from Araucaria heterophylla (Norfolk Island pine).